The following is a 100-amino-acid chain: Small ribosomal subunit protein uS14 (100 aa).

The protein belongs to the universal ribosomal protein uS14 family. As to quaternary structure, part of the 30S ribosomal subunit. Contacts proteins S3 and S10.

Its function is as follows. Binds 16S rRNA, required for the assembly of 30S particles and may also be responsible for determining the conformation of the 16S rRNA at the A site. The chain is Small ribosomal subunit protein uS14 from Prochlorococcus marinus (strain NATL1A).